The chain runs to 1046 residues: DNA-directed RNA polymerase subunit beta' (1046 aa).

Residues Asp383, Asp385, and Asp387 each contribute to the Mg(2+) site. 4 residues coordinate Zn(2+): Cys752, Cys826, Cys833, and Cys836.

This sequence belongs to the RNA polymerase beta' chain family. As to quaternary structure, the RNAP catalytic core consists of 2 alpha, 1 beta, 1 beta' and 1 omega subunit. When a sigma factor is associated with the core the holoenzyme is formed, which can initiate transcription. Requires Mg(2+) as cofactor. Zn(2+) is required as a cofactor.

It carries out the reaction RNA(n) + a ribonucleoside 5'-triphosphate = RNA(n+1) + diphosphate. In terms of biological role, DNA-dependent RNA polymerase catalyzes the transcription of DNA into RNA using the four ribonucleoside triphosphates as substrates. The sequence is that of DNA-directed RNA polymerase subunit beta' from Weissella hellenica.